A 102-amino-acid polypeptide reads, in one-letter code: Ferredoxin (102 aa).

4Fe-4S ferredoxin-type domains follow at residues 45 to 73 (VSVN…ELVE) and 74 to 102 (TWIE…EVMK). [4Fe-4S] cluster-binding residues include C54, C57, C60, C64, C83, C86, C89, and C93.

It depends on [4Fe-4S] cluster as a cofactor.

Its pathway is membrane lipid metabolism; glycerophospholipid metabolism. In terms of biological role, ferredoxin that is the specific electron donor for the geranylgeranyl reductase GGR involved in the biosynthesis of archaeal membrane lipids. The sequence is that of Ferredoxin from Methanosarcina acetivorans (strain ATCC 35395 / DSM 2834 / JCM 12185 / C2A).